Consider the following 366-residue polypeptide: D-alanine--D-alanine ligase (366 aa).

Residues Lys-144 to Glu-347 form the ATP-grasp domain. Lys-174–Glu-229 provides a ligand contact to ATP. 3 residues coordinate Mg(2+): Asp-301, Glu-314, and Asn-316.

Belongs to the D-alanine--D-alanine ligase family. Mg(2+) is required as a cofactor. The cofactor is Mn(2+).

It localises to the cytoplasm. It catalyses the reaction 2 D-alanine + ATP = D-alanyl-D-alanine + ADP + phosphate + H(+). It participates in cell wall biogenesis; peptidoglycan biosynthesis. Cell wall formation. The polypeptide is D-alanine--D-alanine ligase (Oceanobacillus iheyensis (strain DSM 14371 / CIP 107618 / JCM 11309 / KCTC 3954 / HTE831)).